The primary structure comprises 399 residues: RNA-binding protein cabeza (399 aa).

Residues 1 to 12 (MERGGYGGGSGQ) are compositionally biased toward gly residues. The interval 1–82 (MERGGYGGGS…RGGNSYGNGG (82 aa)) is disordered. Polar residues predominate over residues 24 to 34 (YQQMPNKTGNY). Gly residues predominate over residues 43–69 (KQGGGYDSGSGHRGSGGSGNGGGGGGS). The RRM domain occupies 120–206 (DTIFVSGMDP…NAIKVSLAQR (87 aa)). Disordered regions lie at residues 209 to 276 (NWNK…QPRD) and 300 to 399 (TPKG…SRPY). A compositionally biased stretch (gly residues) spans 212 to 271 (KGGGGGGGGGGRGGFGGRRGGGGGGGGGGGGGGRFDRGGGGGGGRYDRGGGGGGGGGGGN). Residues 275–304 (RDGDWKCNSCNNTNFAWRNECNRCKTPKGD) form a RanBP2-type zinc finger. 3 stretches are compositionally biased toward gly residues: residues 308–339 (SSGGGGGGGYGGGGGGGGYDRGNDRGSGGGGY), 347–361 (NSQGGGGGGGGGGGY), and 368–380 (NGGGRGGRGGGGG). Positions 387-399 (PMRNDGGMRSRPY) are enriched in low complexity.

Belongs to the RRM TET family. In terms of tissue distribution, ubiquitous. Enriched in the brain and central nervous system during embryogenesis. Enriched in the adult head. Embryos contain both isoforms A and B, whereas later in development (heads and torsos) only isoform B is detected.

The protein resides in the nucleus. Functionally, may participate in a function common to the expression of most genes transcribed by RNA polymerase II. The protein is RNA-binding protein cabeza (caz) of Drosophila melanogaster (Fruit fly).